An 81-amino-acid chain; its full sequence is Photosystem I iron-sulfur center (81 aa).

4Fe-4S ferredoxin-type domains are found at residues 2–31 and 39–68; these read SHSV…MVPW and IASA…VRVY. Cys-11, Cys-14, Cys-17, Cys-21, Cys-48, Cys-51, Cys-54, and Cys-58 together coordinate [4Fe-4S] cluster.

The eukaryotic PSI reaction center is composed of at least 11 subunits. The cofactor is [4Fe-4S] cluster.

It is found in the plastid. The protein resides in the chloroplast thylakoid membrane. It carries out the reaction reduced [plastocyanin] + hnu + oxidized [2Fe-2S]-[ferredoxin] = oxidized [plastocyanin] + reduced [2Fe-2S]-[ferredoxin]. Its function is as follows. Apoprotein for the two 4Fe-4S centers FA and FB of photosystem I (PSI); essential for photochemical activity. FB is the terminal electron acceptor of PSI, donating electrons to ferredoxin. The C-terminus interacts with PsaA/B/D and helps assemble the protein into the PSI complex. Required for binding of PsaD and PsaE to PSI. PSI is a plastocyanin/cytochrome c6-ferredoxin oxidoreductase, converting photonic excitation into a charge separation, which transfers an electron from the donor P700 chlorophyll pair to the spectroscopically characterized acceptors A0, A1, FX, FA and FB in turn. The protein is Photosystem I iron-sulfur center of Nephroselmis olivacea (Green alga).